Here is a 338-residue protein sequence, read N- to C-terminus: RNA 3'-terminal phosphate cyclase (338 aa).

Residues glutamine 103 and 283–287 (YLADQ) contribute to the ATP site. The Tele-AMP-histidine intermediate role is filled by histidine 308.

It belongs to the RNA 3'-terminal cyclase family. Type 1 subfamily.

The protein localises to the cytoplasm. The catalysed reaction is a 3'-end 3'-phospho-ribonucleotide-RNA + ATP = a 3'-end 2',3'-cyclophospho-ribonucleotide-RNA + AMP + diphosphate. Catalyzes the conversion of 3'-phosphate to a 2',3'-cyclic phosphodiester at the end of RNA. The mechanism of action of the enzyme occurs in 3 steps: (A) adenylation of the enzyme by ATP; (B) transfer of adenylate to an RNA-N3'P to produce RNA-N3'PP5'A; (C) and attack of the adjacent 2'-hydroxyl on the 3'-phosphorus in the diester linkage to produce the cyclic end product. The biological role of this enzyme is unknown but it is likely to function in some aspects of cellular RNA processing. This chain is RNA 3'-terminal phosphate cyclase, found in Shigella boydii serotype 4 (strain Sb227).